Here is a 182-residue protein sequence, read N- to C-terminus: MASSMISSATIATVNCSSPAQANMVAPFTGLKSASAFPVTRKANNDITSLASNGGRVQCMQVWPPLGKKKFETLSYLPDLTPVQLAKEVDYLLRSKWIPCLEFELEEGFVHRKYSSLPTYYDGRYWTMWKLPMFGCTDSAQVLEELENCKKEYPNAFIRIIGFDNVRQVQCISFIAYKPKGY.

The transit peptide at 1–58 (MASSMISSATIATVNCSSPAQANMVAPFTGLKSASAFPVTRKANNDITSLASNGGRVQ) directs the protein to the chloroplast.

The protein belongs to the RuBisCO small chain family. As to quaternary structure, heterohexadecamer of 8 large and 8 small subunits.

Its subcellular location is the plastid. The protein localises to the chloroplast. Its function is as follows. RuBisCO catalyzes two reactions: the carboxylation of D-ribulose 1,5-bisphosphate, the primary event in carbon dioxide fixation, as well as the oxidative fragmentation of the pentose substrate. Both reactions occur simultaneously and in competition at the same active site. Although the small subunit is not catalytic it is essential for maximal activity. The polypeptide is Ribulose bisphosphate carboxylase small subunit, chloroplastic (Gossypium hirsutum (Upland cotton)).